We begin with the raw amino-acid sequence, 1028 residues long: Beta-galactosidase (1028 aa).

Residues asparagine 104 and aspartate 203 each contribute to the substrate site. Aspartate 203 provides a ligand contact to Na(+). Residues glutamate 418, histidine 420, and glutamate 463 each contribute to the Mg(2+) site. Residues glutamate 463 and 539 to 542 contribute to the substrate site; that span reads EYAH. Catalysis depends on glutamate 463, which acts as the Proton donor. Residue glutamate 539 is the Nucleophile of the active site. Position 599 (asparagine 599) interacts with Mg(2+). Na(+)-binding residues include phenylalanine 603 and asparagine 606. The substrate site is built by asparagine 606 and tryptophan 1004.

The protein belongs to the glycosyl hydrolase 2 family. Homotetramer. Mg(2+) serves as cofactor. Na(+) is required as a cofactor.

It catalyses the reaction Hydrolysis of terminal non-reducing beta-D-galactose residues in beta-D-galactosides.. This is Beta-galactosidase from Enterobacter sp. (strain 638).